We begin with the raw amino-acid sequence, 151 residues long: Ribosome maturation factor RimP (151 aa).

The protein belongs to the RimP family.

It localises to the cytoplasm. Functionally, required for maturation of 30S ribosomal subunits. The protein is Ribosome maturation factor RimP of Thermoanaerobacter sp. (strain X514).